A 577-amino-acid chain; its full sequence is Galectin-3-binding protein (577 aa).

The first 18 residues, 1–18, serve as a signal peptide directing secretion; it reads MALLWLLSVFLLVPGTQG. The region spanning 24-124 is the SRCR domain; the sequence is MRLVNGASAN…HEKDAGVVCS (101 aa). Cystine bridges form between Cys-49–Cys-113, Cys-62–Cys-123, and Cys-93–Cys-103. The N-linked (GlcNAc...) asparagine glycan is linked to Asn-69. Residue Asn-125 is glycosylated (N-linked (GlcNAc...) asparagine). Residues 153–221 enclose the BTB domain; sequence CDLFIQVTGQ…FYSRRIEVSM (69 aa). The BACK domain maps to 260–360; the sequence is PLDLYAYARA…MLPQELFELQ (101 aa). N-linked (GlcNAc...) asparagine glycosylation is found at Asn-362, Asn-398, Asn-543, and Asn-572.

Homodimers and homomultimers. The multimers form ring-like structures with a diameter of 30-40 nm. Binds LGALS1 and LGALS3. Binds ITGB1, COL4A1, COL5A1, COL6A1, FN1 and NID. Interacts with PPIC (in vitro). The unglycosylated form interacts with PDE4DIP isoform 2/MMG8/SMYLE; this interaction may connect a pericentrosomal complex to the gamma-tubulin ring complex (gamma-TuRC) to promote microtubule assembly and acetylation. Post-translationally, N-glycosylated. As to expression, detected in embryo, liver, spleen, kidney, lung, heart, intestine, thymus and lymph node.

It is found in the secreted. It localises to the extracellular space. The protein resides in the extracellular matrix. Promotes integrin-mediated cell adhesion. May stimulate host defense against viruses and tumor cells. In Mus musculus (Mouse), this protein is Galectin-3-binding protein (Lgals3bp).